A 356-amino-acid chain; its full sequence is sn-glycerol-3-phosphate import ATP-binding protein UgpC (356 aa).

The ABC transporter domain occupies 4 to 235 (LKLQAVTKSW…PASRFVASFI (232 aa)). 37-44 (GPSGCGKS) provides a ligand contact to ATP.

It belongs to the ABC transporter superfamily. sn-glycerol-3-phosphate importer (TC 3.A.1.1.3) family. The complex is composed of two ATP-binding proteins (UgpC), two transmembrane proteins (UgpA and UgpE) and a solute-binding protein (UgpB).

It is found in the cell inner membrane. It carries out the reaction sn-glycerol 3-phosphate(out) + ATP + H2O = sn-glycerol 3-phosphate(in) + ADP + phosphate + H(+). Its function is as follows. Part of the ABC transporter complex UgpBAEC involved in sn-glycerol-3-phosphate (G3P) import. Responsible for energy coupling to the transport system. The chain is sn-glycerol-3-phosphate import ATP-binding protein UgpC from Salmonella choleraesuis (strain SC-B67).